Reading from the N-terminus, the 488-residue chain is Cis-aconitate decarboxylase (488 aa).

This sequence belongs to the PrpD family. In terms of assembly, homodimer. As to expression, expressed in LPS-tolerized macrophages (at protein level). Expressed in the luminal epithelial cells of pregnant uterus. Expressed in microglia and macrophage cells.

The protein resides in the mitochondrion. The enzyme catalyses cis-aconitate + H(+) = itaconate + CO2. Cis-aconitate decarboxylase that catalyzes production of itaconate and is involved in the inhibition of the inflammatory response. Acts as a negative regulator of the Toll-like receptors (TLRs)-mediated inflammatory innate response by stimulating the tumor necrosis factor alpha-induced protein TNFAIP3 expression via reactive oxygen species (ROS) in LPS-tolerized macrophages. Involved in antimicrobial response of innate immune cells; ACOD1-mediated itaconic acid production contributes to the antimicrobial activity of macrophages by generating itaconate, leading to alkylation of proteins, such as TFEB. Involved in antiviral response following infection by flavivirus in neurons: ACOD1-mediated itaconate production inhibits the activity of succinate dehydrogenase, generating a metabolic state in neurons that suppresses replication of viral genomes. Plays a role in the embryo implantation. The protein is Cis-aconitate decarboxylase of Mus musculus (Mouse).